The following is a 392-amino-acid chain: Trans-2-enoyl-CoA reductase [NADH] (392 aa).

Residues 74-75 (FE), 111-112 (DA), and 141-142 (LA) contribute to the NAD(+) site. Tyr227 is a binding site for substrate. Catalysis depends on Tyr237, which acts as the Proton donor. NAD(+)-binding positions include Lys246 and 276–278 (VVT).

Belongs to the TER reductase family. In terms of assembly, monomer.

The catalysed reaction is a 2,3-saturated acyl-CoA + NAD(+) = a (2E)-enoyl-CoA + NADH + H(+). Its pathway is lipid metabolism; fatty acid biosynthesis. Its function is as follows. Involved in the fatty acid synthesis (FAS II). Catalyzes the reduction of a carbon-carbon double bond in an enoyl moiety that is covalently linked to a coenzyme A (CoA). In Brachyspira hyodysenteriae (strain ATCC 49526 / WA1), this protein is Trans-2-enoyl-CoA reductase [NADH].